The chain runs to 251 residues: MEGGAAAATPTALPYYVAFSQLLGLTLVAMTGAWLGLYRGGIAWESDLQFNAHPLCMVIGLIFLQGNALLVYRVFRNEAKRTTKVLHGLLHIFALVIALVGLVAVFDYHRKKGYADLYSLHSWCGILVFVLYFVQWLVGFSFFLFPGASFSLRSRYRPQHIFFGATIFLLSVGTALLGLKEALLFNLGGKYSAFEPEGVLANVLGLLLACFGGAVLYILTRADWKRPSQAEEQALSMDFKTLTEGDSPGSQ.

N-acetylmethionine is present on methionine 1. Residues 1 to 16 (MEGGAAAATPTALPYY) are Cytoplasmic-facing. A helical membrane pass occupies residues 17–37 (VAFSQLLGLTLVAMTGAWLGL). The 202-residue stretch at 19-220 (FSQLLGLTLV…FGGAVLYILT (202 aa)) folds into the Cytochrome b561 domain. At 38–51 (YRGGIAWESDLQFN) the chain is on the vesicular side. The chain crosses the membrane as a helical span at residues 52-72 (AHPLCMVIGLIFLQGNALLVY). Residues histidine 53, arginine 73, and lysine 80 each coordinate heme b. The Cytoplasmic portion of the chain corresponds to 73-85 (RVFRNEAKRTTKV). L-ascorbate-binding residues include lysine 80 and lysine 84. Residues 86–106 (LHGLLHIFALVIALVGLVAVF) form a helical membrane-spanning segment. Residues histidine 87, 116–119 (DLYS), and histidine 121 contribute to the heme b site. Topologically, residues 107 to 124 (DYHRKKGYADLYSLHSWC) are vesicular. Residues 125–145 (GILVFVLYFVQWLVGFSFFLF) traverse the membrane as a helical segment. The Cytoplasmic portion of the chain corresponds to 146-158 (PGASFSLRSRYRP). Arginine 153 provides a ligand contact to L-ascorbate. The helical transmembrane segment at 159–179 (QHIFFGATIFLLSVGTALLGL) threads the bilayer. Heme b-binding residues include histidine 160 and glutamate 181. The Vesicular portion of the chain corresponds to 180–198 (KEALLFNLGGKYSAFEPEG). A helical transmembrane segment spans residues 199–219 (VLANVLGLLLACFGGAVLYIL). Residues 220–251 (TRADWKRPSQAEEQALSMDFKTLTEGDSPGSQ) are Cytoplasmic-facing. Lysine 225 provides a ligand contact to heme b. A Phosphoserine modification is found at serine 247.

Requires heme b as cofactor. Expressed in many tissues, in particular the brain especially in the cortex and hippocampus.

It is found in the cytoplasmic vesicle. It localises to the secretory vesicle. Its subcellular location is the chromaffin granule membrane. It catalyses the reaction monodehydro-L-ascorbate radical(out) + L-ascorbate(in) = monodehydro-L-ascorbate radical(in) + L-ascorbate(out). Functionally, transmembrane reductase that uses ascorbate as an electron donor in the cytoplasm and transfers electrons across membranes to reduce monodehydro-L-ascorbate radical in the lumen of secretory vesicles. It is therefore involved the regeneration and homeostasis within secretory vesicles of ascorbate which in turn provides reducing equivalents needed to support the activity of intravesicular enzymes. This Homo sapiens (Human) protein is Transmembrane ascorbate-dependent reductase CYB561.